A 425-amino-acid chain; its full sequence is UDP-N-acetylglucosamine 1-carboxyvinyltransferase (425 aa).

22–23 contributes to the phosphoenolpyruvate binding site; it reads KN. Residue Arg91 participates in UDP-N-acetyl-alpha-D-glucosamine binding. The Proton donor role is filled by Cys115. Cys115 is subject to 2-(S-cysteinyl)pyruvic acid O-phosphothioketal. UDP-N-acetyl-alpha-D-glucosamine is bound by residues 120 to 124, Asp309, and Ile331; that span reads RPVDL.

Belongs to the EPSP synthase family. MurA subfamily.

It is found in the cytoplasm. It carries out the reaction phosphoenolpyruvate + UDP-N-acetyl-alpha-D-glucosamine = UDP-N-acetyl-3-O-(1-carboxyvinyl)-alpha-D-glucosamine + phosphate. It functions in the pathway cell wall biogenesis; peptidoglycan biosynthesis. Functionally, cell wall formation. Adds enolpyruvyl to UDP-N-acetylglucosamine. In Akkermansia muciniphila (strain ATCC BAA-835 / DSM 22959 / JCM 33894 / BCRC 81048 / CCUG 64013 / CIP 107961 / Muc), this protein is UDP-N-acetylglucosamine 1-carboxyvinyltransferase.